Consider the following 726-residue polypeptide: Germacradienol/geosmin synthase (726 aa).

The germacradienol/germacrene D synthase stretch occupies residues 2-354; it reads TQQPFQLPHF…TSAADVGALL (353 aa). D86, E91, N267, T271, Q276, D455, N598, S602, and E606 together coordinate Mg(2+). The short motif at 86-91 is the DDXXD motif 1; degenerate element; that stretch reads DDHFLE. The geosmin synthase stretch occupies residues 355-726; it reads ADAVAQRARS…VPRSSPALTH (372 aa). The DDXXD motif 2; degenerate motif lies at 455-459; that stretch reads DDYYP.

This sequence belongs to the terpene synthase family. The cofactor is Mg(2+).

The catalysed reaction is (2E,6E)-farnesyl diphosphate + H2O = (1E,4S,5E,7R)-germacra-1(10),5-dien-11-ol + diphosphate. It carries out the reaction (1E,4S,5E,7R)-germacra-1(10),5-dien-11-ol + H2O = (-)-geosmin + acetone. The enzyme catalyses (2E,6E)-farnesyl diphosphate = (-)-germacrene D + diphosphate. The protein operates within secondary metabolite biosynthesis; geosmin biosynthesis. Its pathway is sesquiterpene biosynthesis; germacradienol biosynthesis; germacradienol from farnesyl diphosphate: step 1/1. It functions in the pathway sesquiterpene biosynthesis; germacrene D biosynthesis; germacrene D from farnesyl diphosphate: step 1/1. In terms of biological role, tow-domain protein where the N-terminal domain catalyzes the cyclization of farnesyl diphosphate (FPP) to a 85:15 mixture of the sesquiterpene alcohol germacradienol and the sesquiterpene hydrocarbon germacrene D. The C-terminal domain partially converts the germacradienol formed into geosmin, the characteristic odoriferous ('earthy aroma') constituent of Streptomyces species. This Streptomyces coelicolor (strain ATCC BAA-471 / A3(2) / M145) protein is Germacradienol/geosmin synthase (cyc2).